Here is a 359-residue protein sequence, read N- to C-terminus: Dual-specificity RNA methyltransferase RlmN (359 aa).

The active-site Proton acceptor is the Glu102. The Radical SAM core domain maps to Glu108–Gln351. A disulfide bridge links Cys115 with Cys354. The [4Fe-4S] cluster site is built by Cys122, Cys126, and Cys129. S-adenosyl-L-methionine is bound by residues Gly178–Glu179, Ser210, Ser232–His234, and Asn311. The active-site S-methylcysteine intermediate is the Cys354.

The protein belongs to the radical SAM superfamily. RlmN family. Requires [4Fe-4S] cluster as cofactor.

The protein resides in the cytoplasm. It carries out the reaction adenosine(2503) in 23S rRNA + 2 reduced [2Fe-2S]-[ferredoxin] + 2 S-adenosyl-L-methionine = 2-methyladenosine(2503) in 23S rRNA + 5'-deoxyadenosine + L-methionine + 2 oxidized [2Fe-2S]-[ferredoxin] + S-adenosyl-L-homocysteine. The catalysed reaction is adenosine(37) in tRNA + 2 reduced [2Fe-2S]-[ferredoxin] + 2 S-adenosyl-L-methionine = 2-methyladenosine(37) in tRNA + 5'-deoxyadenosine + L-methionine + 2 oxidized [2Fe-2S]-[ferredoxin] + S-adenosyl-L-homocysteine. Functionally, specifically methylates position 2 of adenine 2503 in 23S rRNA and position 2 of adenine 37 in tRNAs. m2A2503 modification seems to play a crucial role in the proofreading step occurring at the peptidyl transferase center and thus would serve to optimize ribosomal fidelity. The sequence is that of Dual-specificity RNA methyltransferase RlmN from Buchnera aphidicola subsp. Cinara cedri (strain Cc).